The chain runs to 622 residues: 1-deoxy-D-xylulose-5-phosphate synthase (622 aa).

Residues histidine 80 and 121–123 (GHS) contribute to the thiamine diphosphate site. Aspartate 152 is a Mg(2+) binding site. Thiamine diphosphate is bound by residues 153 to 154 (GA), asparagine 181, tyrosine 288, and glutamate 369. Mg(2+) is bound at residue asparagine 181.

The protein belongs to the transketolase family. DXPS subfamily. Homodimer. It depends on Mg(2+) as a cofactor. Thiamine diphosphate serves as cofactor.

The catalysed reaction is D-glyceraldehyde 3-phosphate + pyruvate + H(+) = 1-deoxy-D-xylulose 5-phosphate + CO2. Its pathway is metabolic intermediate biosynthesis; 1-deoxy-D-xylulose 5-phosphate biosynthesis; 1-deoxy-D-xylulose 5-phosphate from D-glyceraldehyde 3-phosphate and pyruvate: step 1/1. In terms of biological role, catalyzes the acyloin condensation reaction between C atoms 2 and 3 of pyruvate and glyceraldehyde 3-phosphate to yield 1-deoxy-D-xylulose-5-phosphate (DXP). This chain is 1-deoxy-D-xylulose-5-phosphate synthase, found in Psychromonas ingrahamii (strain DSM 17664 / CCUG 51855 / 37).